A 752-amino-acid polypeptide reads, in one-letter code: Zinc finger protein 184 (752 aa).

A KRAB domain is found at Val28–Gly99. Ser117, Ser122, and Ser200 each carry phosphoserine. Residue Lys207 forms a Glycyl lysine isopeptide (Lys-Gly) (interchain with G-Cter in SUMO2) linkage. C2H2-type zinc fingers lie at residues Cys223 to His245, Tyr251 to His273, Tyr279 to His301, Tyr307 to His329, Tyr335 to His357, Phe363 to His385, Tyr391 to His413, Tyr419 to His441, Tyr447 to His469, Tyr475 to His497, Phe503 to His525, Tyr531 to His553, Tyr559 to His581, Tyr587 to His609, Tyr615 to His637, Tyr643 to His665, Tyr671 to His693, Tyr699 to His721, and Phe727 to His749.

The protein belongs to the krueppel C2H2-type zinc-finger protein family.

It localises to the nucleus. Its function is as follows. May be involved in transcriptional regulation. This is Zinc finger protein 184 (ZNF184) from Bos taurus (Bovine).